We begin with the raw amino-acid sequence, 246 residues long: Small ribosomal subunit protein uS2 (246 aa).

It belongs to the universal ribosomal protein uS2 family.

This chain is Small ribosomal subunit protein uS2, found in Azotobacter vinelandii (strain DJ / ATCC BAA-1303).